The sequence spans 198 residues: Peptidyl-tRNA hydrolase (198 aa).

Y18 provides a ligand contact to tRNA. H23 acts as the Proton acceptor in catalysis. TRNA contacts are provided by Y69, N71, and N117.

This sequence belongs to the PTH family. Monomer.

The protein resides in the cytoplasm. The enzyme catalyses an N-acyl-L-alpha-aminoacyl-tRNA + H2O = an N-acyl-L-amino acid + a tRNA + H(+). In terms of biological role, hydrolyzes ribosome-free peptidyl-tRNAs (with 1 or more amino acids incorporated), which drop off the ribosome during protein synthesis, or as a result of ribosome stalling. Catalyzes the release of premature peptidyl moieties from peptidyl-tRNA molecules trapped in stalled 50S ribosomal subunits, and thus maintains levels of free tRNAs and 50S ribosomes. In Aeromonas hydrophila subsp. hydrophila (strain ATCC 7966 / DSM 30187 / BCRC 13018 / CCUG 14551 / JCM 1027 / KCTC 2358 / NCIMB 9240 / NCTC 8049), this protein is Peptidyl-tRNA hydrolase.